Here is a 338-residue protein sequence, read N- to C-terminus: Glyceraldehyde-3-phosphate dehydrogenase, cytosolic (338 aa).

NAD(+) is bound by residues 13-14, Asp35, and Arg82; that span reads RI. D-glyceraldehyde 3-phosphate-binding positions include 153-155, Thr184, 213-214, and Arg236; these read SCT and TG. The active-site Nucleophile is the Cys154. Asn318 lines the NAD(+) pocket.

Belongs to the glyceraldehyde-3-phosphate dehydrogenase family. As to quaternary structure, homotetramer.

It is found in the cytoplasm. It carries out the reaction D-glyceraldehyde 3-phosphate + phosphate + NAD(+) = (2R)-3-phospho-glyceroyl phosphate + NADH + H(+). It functions in the pathway carbohydrate degradation; glycolysis; pyruvate from D-glyceraldehyde 3-phosphate: step 1/5. Key enzyme in glycolysis that catalyzes the first step of the pathway by converting D-glyceraldehyde 3-phosphate (G3P) into 3-phospho-D-glyceroyl phosphate. Essential for the maintenance of cellular ATP levels and carbohydrate metabolism. This is Glyceraldehyde-3-phosphate dehydrogenase, cytosolic (GAPC) from Dianthus caryophyllus (Carnation).